The chain runs to 474 residues: Glutamate--tRNA ligase 1 (474 aa).

The short motif at 11 to 21 (PSPTGFLHIGG) is the 'HIGH' region element. The span at 113 to 133 (TARAEGRAPRYDGRWRDRDPS) shows a compositional bias: basic and acidic residues. The tract at residues 113-136 (TARAEGRAPRYDGRWRDRDPSEAP) is disordered. The 'KMSKS' region signature appears at 240–244 (KLSKR). Position 243 (K243) interacts with ATP.

It belongs to the class-I aminoacyl-tRNA synthetase family. Glutamate--tRNA ligase type 1 subfamily. Monomer.

The protein resides in the cytoplasm. The enzyme catalyses tRNA(Glu) + L-glutamate + ATP = L-glutamyl-tRNA(Glu) + AMP + diphosphate. Its function is as follows. Catalyzes the attachment of glutamate to tRNA(Glu) in a two-step reaction: glutamate is first activated by ATP to form Glu-AMP and then transferred to the acceptor end of tRNA(Glu). The polypeptide is Glutamate--tRNA ligase 1 (Methylorubrum extorquens (strain PA1) (Methylobacterium extorquens)).